Reading from the N-terminus, the 299-residue chain is 21S rRNA pseudouridine(2819) synthase (299 aa).

Asp-106 is a catalytic residue.

It belongs to the pseudouridine synthase RluA family.

The protein resides in the mitochondrion. The catalysed reaction is uridine(2819) in 21S rRNA = pseudouridine(2819) in 21S rRNA. Pseudouridylate synthase responsible for the pseudouridine-2819 formation in mitochondrial 21S rRNA. May modulate the efficiency or the fidelity of the mitochondrial translation machinery. The chain is 21S rRNA pseudouridine(2819) synthase (PUS5) from Kluyveromyces lactis (strain ATCC 8585 / CBS 2359 / DSM 70799 / NBRC 1267 / NRRL Y-1140 / WM37) (Yeast).